The primary structure comprises 305 residues: UDP-3-O-acyl-N-acetylglucosamine deacetylase (305 aa).

Residues histidine 79, histidine 238, and aspartate 242 each coordinate Zn(2+). The Proton donor role is filled by histidine 265.

It belongs to the LpxC family. Zn(2+) serves as cofactor.

It carries out the reaction a UDP-3-O-[(3R)-3-hydroxyacyl]-N-acetyl-alpha-D-glucosamine + H2O = a UDP-3-O-[(3R)-3-hydroxyacyl]-alpha-D-glucosamine + acetate. Its pathway is glycolipid biosynthesis; lipid IV(A) biosynthesis; lipid IV(A) from (3R)-3-hydroxytetradecanoyl-[acyl-carrier-protein] and UDP-N-acetyl-alpha-D-glucosamine: step 2/6. Catalyzes the hydrolysis of UDP-3-O-myristoyl-N-acetylglucosamine to form UDP-3-O-myristoylglucosamine and acetate, the committed step in lipid A biosynthesis. The sequence is that of UDP-3-O-acyl-N-acetylglucosamine deacetylase from Actinobacillus succinogenes (strain ATCC 55618 / DSM 22257 / CCUG 43843 / 130Z).